A 483-amino-acid chain; its full sequence is Nuc-1 negative regulatory protein preg (483 aa).

3 stretches are compositionally biased toward low complexity: residues 1 to 32 (MLTRSPASAAATSPTTTVTVTVTAAATSPRPS), 60 to 80 (SSRRQSATAPATSSTSLPISI), and 176 to 200 (ASALASTSEATAAPIPHGPTVAVAV). Disordered stretches follow at residues 1 to 112 (MLTR…SRPQ), 164 to 234 (NTVG…SQGD), and 434 to 483 (CPEP…RHAT). The segment covering 435 to 473 (PEPEEADDEDEDEELDESDAIGDDDDDIDGEGGEREEET) has biased composition (acidic residues).

Belongs to the cyclin family.

Negative regulator, together with pgov, of the transcriptional activator nuc-1, which controls the expression of phosphorous acquisition enzymes. The chain is Nuc-1 negative regulatory protein preg (preg) from Neurospora crassa (strain ATCC 24698 / 74-OR23-1A / CBS 708.71 / DSM 1257 / FGSC 987).